The primary structure comprises 108 residues: MIKTTLLFFATALCEIIGCFLPWLWLKRNASIWLLLPAGISLALFVWLLTLHPAASGRVYAAYGGVYVCTALIWLRVVDGVKLTLYDWTGALIALCGMLIIVAGWGRT.

The Periplasmic portion of the chain corresponds to Met1–Thr5. Residues Leu6–Leu26 form a helical membrane-spanning segment. At Lys27–Ala30 the chain is on the cytoplasmic side. A helical membrane pass occupies residues Ser31–Leu51. Topologically, residues His52–Tyr60 are periplasmic. A helical transmembrane segment spans residues Ala61–Val81. At Lys82–Thr84 the chain is on the cytoplasmic side. A helical transmembrane segment spans residues Leu85–Trp105. Topologically, residues Gly106–Thr108 are periplasmic.

It belongs to the UPF0060 family.

Its subcellular location is the cell inner membrane. This Escherichia coli O127:H6 (strain E2348/69 / EPEC) protein is UPF0060 membrane protein YnfA.